The following is a 109-amino-acid chain: Staphostatin B (109 aa).

The segment at 97–101 is binds to staphopain B; it reads IGTSR.

Belongs to the protease inhibitor I57 (SspC) family. In terms of assembly, forms a stable non-covalent complex with prematurely activated/folded SspB.

Its subcellular location is the cytoplasm. Specifically inhibits the cysteine protease staphopain B (SspB) by blocking the active site of the enzyme. Probably required to protect cytoplasmic proteins from being degraded by prematurely activated/folded prostaphopain B. Also involved in growth capacity, viability and bacterial morphology. This Staphylococcus aureus (strain Mu50 / ATCC 700699) protein is Staphostatin B (sspC).